Consider the following 213-residue polypeptide: Thiamine-phosphate synthase (213 aa).

4-amino-2-methyl-5-(diphosphooxymethyl)pyrimidine-binding positions include glutamine 38–lysine 42 and asparagine 70. The Mg(2+) site is built by aspartate 71 and aspartate 90. Serine 109 is a 4-amino-2-methyl-5-(diphosphooxymethyl)pyrimidine binding site. Threonine 135–threonine 137 lines the 2-[(2R,5Z)-2-carboxy-4-methylthiazol-5(2H)-ylidene]ethyl phosphate pocket. Lysine 138 contacts 4-amino-2-methyl-5-(diphosphooxymethyl)pyrimidine. 2-[(2R,5Z)-2-carboxy-4-methylthiazol-5(2H)-ylidene]ethyl phosphate contacts are provided by residues glycine 168 and valine 188 to serine 189.

Belongs to the thiamine-phosphate synthase family. Mg(2+) serves as cofactor.

It catalyses the reaction 2-[(2R,5Z)-2-carboxy-4-methylthiazol-5(2H)-ylidene]ethyl phosphate + 4-amino-2-methyl-5-(diphosphooxymethyl)pyrimidine + 2 H(+) = thiamine phosphate + CO2 + diphosphate. It carries out the reaction 2-(2-carboxy-4-methylthiazol-5-yl)ethyl phosphate + 4-amino-2-methyl-5-(diphosphooxymethyl)pyrimidine + 2 H(+) = thiamine phosphate + CO2 + diphosphate. The enzyme catalyses 4-methyl-5-(2-phosphooxyethyl)-thiazole + 4-amino-2-methyl-5-(diphosphooxymethyl)pyrimidine + H(+) = thiamine phosphate + diphosphate. The protein operates within cofactor biosynthesis; thiamine diphosphate biosynthesis; thiamine phosphate from 4-amino-2-methyl-5-diphosphomethylpyrimidine and 4-methyl-5-(2-phosphoethyl)-thiazole: step 1/1. Functionally, condenses 4-methyl-5-(beta-hydroxyethyl)thiazole monophosphate (THZ-P) and 2-methyl-4-amino-5-hydroxymethyl pyrimidine pyrophosphate (HMP-PP) to form thiamine monophosphate (TMP). The protein is Thiamine-phosphate synthase of Pectobacterium atrosepticum (strain SCRI 1043 / ATCC BAA-672) (Erwinia carotovora subsp. atroseptica).